The primary structure comprises 107 residues: uncharacterized protein (107 aa).

The tract at residues 23 to 64 is disordered; sequence SASSSSSTRIPSGFASATSSKSNSSTKSSPSPINSFNNKTNN. Over residues 37–57 the composition is skewed to low complexity; the sequence is ASATSSKSNSSTKSSPSPINS. The helical transmembrane segment at 76 to 98 threads the bilayer; sequence LAFGIVEFMVFNGMISTITTTTF.

The protein localises to the membrane. This is an uncharacterized protein from Dictyostelium discoideum (Social amoeba).